A 520-amino-acid chain; its full sequence is L-cysteine:1D-myo-inositol 2-amino-2-deoxy-alpha-D-glucopyranoside ligase (520 aa).

Residue Cys-48 coordinates Zn(2+). L-cysteinyl-5'-AMP-binding positions include 48–51, Thr-63, and 86–88; these read CGIT and NVT. Positions 50–60 match the 'HIGH' region motif; it reads ITPYDSTHLGH. A 'ERGGDP' region motif is present at residues 192–197; that stretch reads ERGGDP. L-cysteinyl-5'-AMP is bound at residue Trp-232. Position 236 (Cys-236) interacts with Zn(2+). L-cysteinyl-5'-AMP is bound at residue 254 to 256; that stretch reads GED. His-261 contributes to the Zn(2+) binding site. Ile-288 is an L-cysteinyl-5'-AMP binding site. A 'KMSKS' region motif is present at residues 294–298; it reads KMSKS.

It belongs to the class-I aminoacyl-tRNA synthetase family. MshC subfamily. In terms of assembly, monomer. The cofactor is Zn(2+).

The catalysed reaction is 1D-myo-inositol 2-amino-2-deoxy-alpha-D-glucopyranoside + L-cysteine + ATP = 1D-myo-inositol 2-(L-cysteinylamino)-2-deoxy-alpha-D-glucopyranoside + AMP + diphosphate + H(+). Catalyzes the ATP-dependent condensation of GlcN-Ins and L-cysteine to form L-Cys-GlcN-Ins. In Corynebacterium kroppenstedtii (strain DSM 44385 / JCM 11950 / CIP 105744 / CCUG 35717), this protein is L-cysteine:1D-myo-inositol 2-amino-2-deoxy-alpha-D-glucopyranoside ligase.